The sequence spans 314 residues: E3 ubiquitin-protein ligase CHIP (314 aa).

Basic and acidic residues predominate over residues 1–11 (MKGKEEREREG). The segment at 1 to 47 (MKGKEEREREGGGGAVGPGAAGPGAGGGSPEKSHSAQEHKEQGNRLF) is disordered. Residues 12–29 (GGGAVGPGAAGPGAGGGS) are compositionally biased toward gly residues. Residues 31-43 (EKSHSAQEHKEQG) show a composition bias toward basic and acidic residues. 3 TPR repeats span residues 36-69 (AQEHKEQGNRLFGGRKYPEAAAAYGRAINRNPLV), 70-103 (AVYYTNRALCYLKMQQHDKALADCKRALELDGQS), and 105-137 (KAHFFLGQCQMEMENYDEAIANLQRAYNLAKEQ). One can recognise a U-box domain in the interval 237–311 (DIPDYLCGKI…DAFISENGWV (75 aa)).

Homodimer.

It is found in the cytoplasm. Its subcellular location is the nucleus. It localises to the mitochondrion. It catalyses the reaction S-ubiquitinyl-[E2 ubiquitin-conjugating enzyme]-L-cysteine + [acceptor protein]-L-lysine = [E2 ubiquitin-conjugating enzyme]-L-cysteine + N(6)-ubiquitinyl-[acceptor protein]-L-lysine.. In terms of biological role, E3 ubiquitin-protein ligase which targets misfolded chaperone substrates towards proteasomal degradation. Collaborates with ATXN3 in the degradation of misfolded chaperone substrates: ATXN3 restricting the length of ubiquitin chain attached to STUB1/CHIP substrates and preventing further chain extension. The polypeptide is E3 ubiquitin-protein ligase CHIP (Gallus gallus (Chicken)).